The chain runs to 425 residues: Glucose-1-phosphate adenylyltransferase (425 aa).

Residues tyrosine 110, glycine 175, 190–191, and serine 208 contribute to the alpha-D-glucose 1-phosphate site; that span reads EK.

The protein belongs to the bacterial/plant glucose-1-phosphate adenylyltransferase family. In terms of assembly, homotetramer.

The catalysed reaction is alpha-D-glucose 1-phosphate + ATP + H(+) = ADP-alpha-D-glucose + diphosphate. It participates in glycan biosynthesis; glycogen biosynthesis. In terms of biological role, involved in the biosynthesis of ADP-glucose, a building block required for the elongation reactions to produce glycogen. Catalyzes the reaction between ATP and alpha-D-glucose 1-phosphate (G1P) to produce pyrophosphate and ADP-Glc. This is Glucose-1-phosphate adenylyltransferase from Nitrosospira multiformis (strain ATCC 25196 / NCIMB 11849 / C 71).